Here is a 145-residue protein sequence, read N- to C-terminus: D-aminoacyl-tRNA deacylase (145 aa).

The Gly-cisPro motif, important for rejection of L-amino acids motif lies at G137–P138.

The protein belongs to the DTD family. In terms of assembly, homodimer.

The protein resides in the cytoplasm. It catalyses the reaction glycyl-tRNA(Ala) + H2O = tRNA(Ala) + glycine + H(+). It carries out the reaction a D-aminoacyl-tRNA + H2O = a tRNA + a D-alpha-amino acid + H(+). Its function is as follows. An aminoacyl-tRNA editing enzyme that deacylates mischarged D-aminoacyl-tRNAs. Also deacylates mischarged glycyl-tRNA(Ala), protecting cells against glycine mischarging by AlaRS. Acts via tRNA-based rather than protein-based catalysis; rejects L-amino acids rather than detecting D-amino acids in the active site. By recycling D-aminoacyl-tRNA to D-amino acids and free tRNA molecules, this enzyme counteracts the toxicity associated with the formation of D-aminoacyl-tRNA entities in vivo and helps enforce protein L-homochirality. This Chromohalobacter salexigens (strain ATCC BAA-138 / DSM 3043 / CIP 106854 / NCIMB 13768 / 1H11) protein is D-aminoacyl-tRNA deacylase.